The sequence spans 117 residues: Holo-[acyl-carrier-protein] synthase (117 aa).

D6 and E55 together coordinate Mg(2+).

It belongs to the P-Pant transferase superfamily. AcpS family. The cofactor is Mg(2+).

Its subcellular location is the cytoplasm. It catalyses the reaction apo-[ACP] + CoA = holo-[ACP] + adenosine 3',5'-bisphosphate + H(+). Transfers the 4'-phosphopantetheine moiety from coenzyme A to a Ser of acyl-carrier-protein. The sequence is that of Holo-[acyl-carrier-protein] synthase from Chlorobaculum tepidum (strain ATCC 49652 / DSM 12025 / NBRC 103806 / TLS) (Chlorobium tepidum).